A 357-amino-acid chain; its full sequence is Trans-enoyl reductase buaC (357 aa).

50–53 provides a ligand contact to NADP(+); sequence VDTK. 135-142 contributes to the substrate binding site; that stretch reads TALVSACM. Residues 170-173, 193-196, Tyr-211, and 258-259 each bind NADP(+); these read STAT, SPKN, and LN. Substrate is bound at residue 278–282; it reads ATLIT. Residue 347–348 coordinates NADP(+); sequence IS.

This sequence belongs to the zinc-containing alcohol dehydrogenase family. As to quaternary structure, monomer.

It functions in the pathway mycotoxin biosynthesis. Its function is as follows. Trans-enoyl reductase; part of the gene cluster that mediates the biosynthesis of burnettramic acids, an unusual class of bolaamphiphilic pyrrolizidinediones that display potent antibacterial, antifungal, and cytotoxic activities. The first step of the biosynthesis of burnettramic acids is the hydroxylation of proline by the proline hydroxylase buaE to generate 4-hydroxyproline. The PKS-NRPS buaA and trans-enoyl reductase buaC construct the highly reduced polyketide chain, and the condensation (C) domain of buaA then catalyzes the amide bond formation with the activated 4-hydroxyproline. This is followed by the R domain releasing the nascent polyketide-peptide directly via a Dieckmann condensation to afford a tetramic acid fused to the hydroxyproline, generating the bicyclic pyrrolidinedione moiety. The cytochrome P450 monooxygenases buaD and buaG are likely responsible for the multiple hydroxylations on the polyketide chain and its terminus, although in the heterologous context, buaD does not appear to be required. Therefore, while buaG may be a multifunctional cytochrome P450 monooxygenase, it cannot be ruled out that the two secondary alcohols on the polyketide chain could have an acetate origin. Finally, the glycosyltransferase buaB transfers beta-D-mannose to the aglycone burnettramic acid A to form burnettramic acid A. Burnettramic acid B is a minor cis-pyrrolizidine epimer of burnettramic acid A and it is likely that small amounts of it form naturally in acidic environments. This is Trans-enoyl reductase buaC from Petromyces alliaceus (Aspergillus alliaceus).